The sequence spans 621 residues: UvrABC system protein C (621 aa).

The region spanning 20 to 98 is the GIY-YIG domain; sequence TAPGVYRMYA…IKSLTPRYNV (79 aa). The region spanning 207 to 242 is the UVR domain; that stretch reads DLLAEELIQAMQVASEHLEFEQAARLRDLLTSLRSM.

This sequence belongs to the UvrC family. In terms of assembly, interacts with UvrB in an incision complex.

The protein localises to the cytoplasm. Functionally, the UvrABC repair system catalyzes the recognition and processing of DNA lesions. UvrC both incises the 5' and 3' sides of the lesion. The N-terminal half is responsible for the 3' incision and the C-terminal half is responsible for the 5' incision. This is UvrABC system protein C from Xylella fastidiosa (strain M23).